The primary structure comprises 201 residues: Pyridoxal 5'-phosphate synthase subunit PdxT (201 aa).

50-52 (GES) is an L-glutamine binding site. Cys-82 (nucleophile) is an active-site residue. L-glutamine contacts are provided by residues Arg-111 and 139 to 140 (IR). Catalysis depends on charge relay system residues His-180 and Glu-182.

It belongs to the glutaminase PdxT/SNO family. In terms of assembly, in the presence of PdxS, forms a dodecamer of heterodimers. Only shows activity in the heterodimer.

It carries out the reaction aldehydo-D-ribose 5-phosphate + D-glyceraldehyde 3-phosphate + L-glutamine = pyridoxal 5'-phosphate + L-glutamate + phosphate + 3 H2O + H(+). It catalyses the reaction L-glutamine + H2O = L-glutamate + NH4(+). It functions in the pathway cofactor biosynthesis; pyridoxal 5'-phosphate biosynthesis. In terms of biological role, catalyzes the hydrolysis of glutamine to glutamate and ammonia as part of the biosynthesis of pyridoxal 5'-phosphate. The resulting ammonia molecule is channeled to the active site of PdxS. This chain is Pyridoxal 5'-phosphate synthase subunit PdxT, found in Nocardioides sp. (strain ATCC BAA-499 / JS614).